The sequence spans 297 residues: Adrenocorticotropic hormone receptor (297 aa).

At 1–23 (MKHITDLYESVNSTMSNKSDCPP) the chain is on the extracellular side. N-linked (GlcNAc...) asparagine glycans are attached at residues Asn12 and Asn17. 2 disulfides stabilise this stretch: Cys21–Cys253 and Cys245–Cys251. Residues 24 to 49 (VVLPEEVFFTISVIGVLENLIVLLAV) form a helical membrane-spanning segment. Topologically, residues 50–58 (IKNKNLQSP) are cytoplasmic. A helical transmembrane segment spans residues 59 to 79 (MYFFICSLAISDMLGSLYKIL). The Extracellular segment spans residues 80–104 (ENILIIFRNMGYLEPRGGFESTADD). Residues 105–126 (VVDSLFILSLLGSICSLSAIAA) form a helical membrane-spanning segment. The Cytoplasmic segment spans residues 127 to 147 (DRYITIFHALQYQRLVTPRRA). The helical transmembrane segment at 148 to 168 (AVVLLIIWACCIGSGITIVTF) threads the bilayer. Residues 169–180 (SHHVPAVIAFTA) lie on the Extracellular side of the membrane. The helical transmembrane segment at 181-199 (LFPLMLVFILCLYGHMFLL) threads the bilayer. The Cytoplasmic portion of the chain corresponds to 200-217 (ARSHARRVSTLPRANMKG). The helical transmembrane segment at 218–244 (AITLTVLLGVFIFCWAPFVLHILLMTF) threads the bilayer. Residues 245 to 256 (CPADPYCACYLA) are Extracellular-facing. The helical transmembrane segment at 257-278 (LFQVNAVLIMCNAIIDPFIYAF) threads the bilayer. At 279–297 (RSPELRDAFKKMIICKRYP) the chain is on the cytoplasmic side. Residue Cys293 is the site of S-palmitoyl cysteine attachment.

It belongs to the G-protein coupled receptor 1 family. As to quaternary structure, homodimer. Interacts with corticotropin (ACTH). Interacts with MRAP; this interaction targets MC2R to the plasma membrane. Interacts with MRAP2; competing with MRAP for binding to MC2R and impairing the binding of corticotropin (ACTH). Ubiquitinated by MGRN1 that may be involved in post-endocytic trafficking and/or degradation of internalized receptor. Expressed in skin and adrenal gland tissues.

It localises to the cell membrane. Its function is as follows. Hormone receptor primarily expressed in adrenal cortex that plays a key role in regulating adrenocortical function. Upon corticotropin (ACTH) binding, facilitates the release of adrenal glucocorticoids, including cortisol and corticosterone. In addition, MC2R is required for fetal and neonatal adrenal gland development. Mechanistically, activates adenylate cyclase (cAMP), the MAPK cascade as well as the cAMP-dependent protein kinase A pathway leading to steroidogenic factor 1/NR5A1-mediated transcriptional activation. The protein is Adrenocorticotropic hormone receptor (MC2R) of Sus scrofa (Pig).